Consider the following 557-residue polypeptide: Formate--tetrahydrofolate ligase (557 aa).

66-73 is an ATP binding site; sequence TPAGEGKS.

Belongs to the formate--tetrahydrofolate ligase family.

It catalyses the reaction (6S)-5,6,7,8-tetrahydrofolate + formate + ATP = (6R)-10-formyltetrahydrofolate + ADP + phosphate. Its pathway is one-carbon metabolism; tetrahydrofolate interconversion. The sequence is that of Formate--tetrahydrofolate ligase from Clostridium botulinum (strain Kyoto / Type A2).